The following is a 221-amino-acid chain: GTP cyclohydrolase-2 (221 aa).

GTP is bound at residue 63–67 (RLHSE). Zn(2+) is bound by residues cysteine 68, cysteine 79, and cysteine 81. Residues glutamine 84, 107-109 (EGR), and threonine 129 contribute to the GTP site. Residue aspartate 141 is the Proton acceptor of the active site. The Nucleophile role is filled by arginine 143. Serine 164 and lysine 169 together coordinate GTP.

It belongs to the GTP cyclohydrolase II family. Zn(2+) is required as a cofactor.

It catalyses the reaction GTP + 4 H2O = 2,5-diamino-6-hydroxy-4-(5-phosphoribosylamino)-pyrimidine + formate + 2 phosphate + 3 H(+). The protein operates within cofactor biosynthesis; riboflavin biosynthesis; 5-amino-6-(D-ribitylamino)uracil from GTP: step 1/4. Functionally, catalyzes the conversion of GTP to 2,5-diamino-6-ribosylamino-4(3H)-pyrimidinone 5'-phosphate (DARP), formate and pyrophosphate. In Streptomyces coelicolor (strain ATCC BAA-471 / A3(2) / M145), this protein is GTP cyclohydrolase-2.